Consider the following 158-residue polypeptide: uncharacterized protein (158 aa).

A signal peptide spans 1–19; sequence MQKLLLAVLFFSLLAIATA. The segment at 82–158 is disordered; sequence ANPKAEAEPG…VYENDDENEE (77 aa). Over residues 84-107 the composition is skewed to basic and acidic residues; the sequence is PKAEAEPGSLDKEAGTKGEKEKNG. Residues 141–158 are compositionally biased toward acidic residues; the sequence is DDDDDHDDVYENDDENEE.

As to expression, prismatic layer of shell (at protein level). Expressed primarily in the mantle with highest level in the mantle edge and lower level in the mantle pallium.

It is found in the secreted. This is an uncharacterized protein from Pinctada maxima (Silver-lipped pearl oyster).